A 239-amino-acid chain; its full sequence is Isopentenyl-diphosphate Delta-isomerase (239 aa).

Residue lysine 43 participates in substrate binding. Mg(2+)-binding residues include histidine 47 and histidine 58. The Nudix hydrolase domain occupies leucine 56–leucine 210. Substrate is bound by residues arginine 77 and lysine 81. Cysteine 93 is a catalytic residue. Residue serine 94 participates in substrate binding. Mg(2+) is bound by residues glutamate 156 and glutamate 158. Glutamate 158 is a catalytic residue.

The protein belongs to the IPP isomerase type 1 family. The cofactor is Mg(2+).

It carries out the reaction isopentenyl diphosphate = dimethylallyl diphosphate. It participates in isoprenoid biosynthesis; dimethylallyl diphosphate biosynthesis; dimethylallyl diphosphate from isopentenyl diphosphate: step 1/1. Catalyzes the 1,3-allylic rearrangement of the homoallylic substrate isopentenyl (IPP) to its highly electrophilic allylic isomer, dimethylallyl diphosphate (DMAPP). This chain is Isopentenyl-diphosphate Delta-isomerase (ipi), found in Dictyostelium discoideum (Social amoeba).